A 207-amino-acid polypeptide reads, in one-letter code: Dephospho-CoA kinase (207 aa).

The DPCK domain occupies 5–203; that stretch reads AVGLTGGVAC…ARYRALASVF (199 aa). Residue 13 to 18 participates in ATP binding; sequence ACGKSL.

The protein belongs to the CoaE family.

The protein resides in the cytoplasm. It carries out the reaction 3'-dephospho-CoA + ATP = ADP + CoA + H(+). It participates in cofactor biosynthesis; coenzyme A biosynthesis; CoA from (R)-pantothenate: step 5/5. In terms of biological role, catalyzes the phosphorylation of the 3'-hydroxyl group of dephosphocoenzyme A to form coenzyme A. In Xylella fastidiosa (strain Temecula1 / ATCC 700964), this protein is Dephospho-CoA kinase.